The chain runs to 196 residues: Peptidyl-tRNA hydrolase (196 aa).

Tyr-16 is a binding site for tRNA. Residue His-21 is the Proton acceptor of the active site. TRNA is bound by residues Phe-67, Asn-69, and Asn-115.

The protein belongs to the PTH family. As to quaternary structure, monomer.

It localises to the cytoplasm. The enzyme catalyses an N-acyl-L-alpha-aminoacyl-tRNA + H2O = an N-acyl-L-amino acid + a tRNA + H(+). Functionally, hydrolyzes ribosome-free peptidyl-tRNAs (with 1 or more amino acids incorporated), which drop off the ribosome during protein synthesis, or as a result of ribosome stalling. Its function is as follows. Catalyzes the release of premature peptidyl moieties from peptidyl-tRNA molecules trapped in stalled 50S ribosomal subunits, and thus maintains levels of free tRNAs and 50S ribosomes. The chain is Peptidyl-tRNA hydrolase from Edwardsiella ictaluri (strain 93-146).